The following is a 327-amino-acid chain: Transaldolase (327 aa).

Lys-132 functions as the Schiff-base intermediate with substrate in the catalytic mechanism.

Belongs to the transaldolase family. Type 1 subfamily.

The protein resides in the cytoplasm. It carries out the reaction D-sedoheptulose 7-phosphate + D-glyceraldehyde 3-phosphate = D-erythrose 4-phosphate + beta-D-fructose 6-phosphate. It participates in carbohydrate degradation; pentose phosphate pathway; D-glyceraldehyde 3-phosphate and beta-D-fructose 6-phosphate from D-ribose 5-phosphate and D-xylulose 5-phosphate (non-oxidative stage): step 2/3. Its function is as follows. Transaldolase is important for the balance of metabolites in the pentose-phosphate pathway. The protein is Transaldolase of Chlamydia pneumoniae (Chlamydophila pneumoniae).